An 827-amino-acid polypeptide reads, in one-letter code: Probable inorganic carbon transporter subunit DabA2 (827 aa).

Residues Cys-351, Asp-353, His-524, and Cys-539 each coordinate Zn(2+).

Belongs to the inorganic carbon transporter (TC 9.A.2) DabA family. As to quaternary structure, forms a complex with DabB2, possibly a heterodimer. It depends on Zn(2+) as a cofactor.

The protein resides in the cell inner membrane. With respect to regulation, uptake of inorganic carbon by cells in the presence of thiosulphate is fully inhibited by the uncouplers carbonyl cyanide m-chlorophenyl hydrazone (CCCP), carbonyl cyanide p-trifluoromethoxyphenyl hydrazone (FCCP), S13 or SF6847. Not inhibited by the ATPase inhibitor N,N-dicyclohexylcarbodiimide (DCCD). Inorganic carbon uptake is inhibited by the ionophore CCCP, suggesting uptake is coupled to a cation gradient. Its function is as follows. Part of an energy-coupled inorganic carbon pump; its substrate may be carbon dioxide. Expression of both dabA2 and dabB2 (DAB2) restores growth in ambient air to E.coli deleted of its carbonic anhydrase genes (called CAfree, deletion of 'can' and 'cynT'); neither dabA2 or dabB2 alone is sufficient. Rescue is pH-independent, suggesting it transports CO(2) and not carbonate ions. Together the genes allow greater than normal uptake of inorganic carbon by E.coli. Uptake of carbon dioxide rather than bicarbonate has been suggested based on kinetic calculations. In Halothiobacillus neapolitanus (strain ATCC 23641 / c2) (Thiobacillus neapolitanus), this protein is Probable inorganic carbon transporter subunit DabA2.